A 334-amino-acid polypeptide reads, in one-letter code: Protein SCO1 homolog 1, mitochondrial (334 aa).

The N-terminal 13 residues, M1–R13, are a transit peptide targeting the mitochondrion. Residues S74–V120 form a disordered region. Composition is skewed to basic and acidic residues over residues T79 to G99 and G107 to V120. Residues V125 to Y144 traverse the membrane as a helical segment. The 166-residue stretch at P166–Q331 folds into the Thioredoxin domain. Residues C206, C210, and H295 each contribute to the Cu cation site.

Belongs to the SCO1/2 family. As to expression, expressed in the whole plant with highest expression in imbibed seeds, embryos, endosperm, and root tips.

It is found in the mitochondrion inner membrane. In terms of biological role, thought to play a role in cellular copper homeostasis, mitochondrial redox signaling or insertion of copper into the active site of COX. Plays an essential role in embryo development. The protein is Protein SCO1 homolog 1, mitochondrial (HCC1) of Arabidopsis thaliana (Mouse-ear cress).